The following is a 506-amino-acid chain: PHD finger protein 10 (506 aa).

Disordered regions lie at residues 1 to 66 (MAAV…QDFG) and 293 to 377 (DPEL…SVSG). Over residues 23-35 (VKEDNSNDTKDPE) the composition is skewed to basic and acidic residues. Polar residues predominate over residues 52–66 (GDSTPSCENSNQDFG). The segment at 90–299 (MLQEQVSEYL…DPLDPELLAL (210 aa)) is SAY. Over residues 326–338 (SIDSSSMNMSESD) the composition is skewed to low complexity. A compositionally biased stretch (basic and acidic residues) spans 353–367 (KVKEKSSTPRKEGSK). The segment at 387–444 (ICGICLKGKDANKKGRSERLIHCSQCDNSGHPSCLDMSAELVAVIKKYPWQCMECKTC) adopts a PHD-type 1; degenerate zinc-finger fold. The PHD-type 2; degenerate zinc-finger motif lies at 446 to 489 (ICGQPHHEEEMMFCDTCDRGYHTFCVGLGALPSGRWICDCCQKV).

This sequence belongs to the SAYP family. As to quaternary structure, component of neural progenitors-specific chromatin remodeling complex (npBAF complex), a subfamily of ATP-dependent SWI/SNF chromatin remodeling complexes.

The protein resides in the nucleus. Its function is as follows. Involved in transcription activity regulation by chromatin remodeling in the context of the neural progenitors-specific chromatin remodeling complex (npBAF complex). May play a role in the proliferation of neural progenitors. This chain is PHD finger protein 10 (phf10), found in Xenopus laevis (African clawed frog).